The following is a 320-amino-acid chain: 4-diphosphocytidyl-2-C-methyl-D-erythritol kinase (320 aa).

Residue Lys-20 is part of the active site. 112-122 (PVAGGMGGGSA) is an ATP binding site. The active site involves Asp-154.

Belongs to the GHMP kinase family. IspE subfamily.

It catalyses the reaction 4-CDP-2-C-methyl-D-erythritol + ATP = 4-CDP-2-C-methyl-D-erythritol 2-phosphate + ADP + H(+). It functions in the pathway isoprenoid biosynthesis; isopentenyl diphosphate biosynthesis via DXP pathway; isopentenyl diphosphate from 1-deoxy-D-xylulose 5-phosphate: step 3/6. Its function is as follows. Catalyzes the phosphorylation of the position 2 hydroxy group of 4-diphosphocytidyl-2C-methyl-D-erythritol. The chain is 4-diphosphocytidyl-2-C-methyl-D-erythritol kinase from Pseudarthrobacter chlorophenolicus (strain ATCC 700700 / DSM 12829 / CIP 107037 / JCM 12360 / KCTC 9906 / NCIMB 13794 / A6) (Arthrobacter chlorophenolicus).